The chain runs to 122 residues: Small ribosomal subunit protein uS13 (122 aa).

Positions 99 to 122 (RGQRTHTNARTRKGPAKAIAGKKK) are disordered.

It belongs to the universal ribosomal protein uS13 family. Part of the 30S ribosomal subunit. Forms a loose heterodimer with protein S19. Forms two bridges to the 50S subunit in the 70S ribosome.

Its function is as follows. Located at the top of the head of the 30S subunit, it contacts several helices of the 16S rRNA. In the 70S ribosome it contacts the 23S rRNA (bridge B1a) and protein L5 of the 50S subunit (bridge B1b), connecting the 2 subunits; these bridges are implicated in subunit movement. Contacts the tRNAs in the A and P-sites. The sequence is that of Small ribosomal subunit protein uS13 from Allorhizobium ampelinum (strain ATCC BAA-846 / DSM 112012 / S4) (Agrobacterium vitis (strain S4)).